We begin with the raw amino-acid sequence, 120 residues long: Ribonuclease P protein component (120 aa).

The protein belongs to the RnpA family. In terms of assembly, consists of a catalytic RNA component (M1 or rnpB) and a protein subunit.

It carries out the reaction Endonucleolytic cleavage of RNA, removing 5'-extranucleotides from tRNA precursor.. Functionally, RNaseP catalyzes the removal of the 5'-leader sequence from pre-tRNA to produce the mature 5'-terminus. It can also cleave other RNA substrates such as 4.5S RNA. The protein component plays an auxiliary but essential role in vivo by binding to the 5'-leader sequence and broadening the substrate specificity of the ribozyme. In Thioalkalivibrio sulfidiphilus (strain HL-EbGR7), this protein is Ribonuclease P protein component.